An 81-amino-acid chain; its full sequence is uncharacterized protein (81 aa).

This is an uncharacterized protein from Sulfolobus islandicus rod-shaped virus 1 (SIRV-1).